We begin with the raw amino-acid sequence, 320 residues long: Mitochondrial fission regulator 1-like-B (320 aa).

Residues 1–37 (MASLGAAAEPERSLFGKDGAEACESPEGRRSGRRKRT) are disordered. The span at 9 to 30 (EPERSLFGKDGAEACESPEGRR) shows a compositional bias: basic and acidic residues.

The protein belongs to the MTFR1 family.

The protein localises to the mitochondrion outer membrane. Mitochondrial protein required for adaptation of miochondrial dynamics to metabolic changes. Regulates mitochondrial morphology at steady state and mediates AMPK-dependent stress-induced mitochondrial fragmentation via the control of OPA1 levels. The protein is Mitochondrial fission regulator 1-like-B (mtfr1l-b) of Xenopus laevis (African clawed frog).